Reading from the N-terminus, the 395-residue chain is S-adenosylmethionine synthase (395 aa).

Histidine 16 is an ATP binding site. Aspartate 18 lines the Mg(2+) pocket. Glutamate 44 serves as a coordination point for K(+). L-methionine contacts are provided by glutamate 57 and glutamine 100. The segment at 100–110 (QSPDIAQGVDR) is flexible loop. Residues 167–169 (DAK), 233–234 (RF), aspartate 242, 248–249 (RK), alanine 265, and lysine 269 contribute to the ATP site. Aspartate 242 provides a ligand contact to L-methionine. Residue lysine 273 coordinates L-methionine.

It belongs to the AdoMet synthase family. Homotetramer; dimer of dimers. Mg(2+) serves as cofactor. Requires K(+) as cofactor.

Its subcellular location is the cytoplasm. The enzyme catalyses L-methionine + ATP + H2O = S-adenosyl-L-methionine + phosphate + diphosphate. It functions in the pathway amino-acid biosynthesis; S-adenosyl-L-methionine biosynthesis; S-adenosyl-L-methionine from L-methionine: step 1/1. Catalyzes the formation of S-adenosylmethionine (AdoMet) from methionine and ATP. The overall synthetic reaction is composed of two sequential steps, AdoMet formation and the subsequent tripolyphosphate hydrolysis which occurs prior to release of AdoMet from the enzyme. The sequence is that of S-adenosylmethionine synthase from Burkholderia lata (strain ATCC 17760 / DSM 23089 / LMG 22485 / NCIMB 9086 / R18194 / 383).